The sequence spans 197 residues: Guanylate kinase (197 aa).

The Guanylate kinase-like domain maps to 6–191 (SKLIILSGPS…CVAQIEKIIS (186 aa)). 13–20 (GPSGVGKG) provides a ligand contact to ATP.

It belongs to the guanylate kinase family.

The protein resides in the cytoplasm. The enzyme catalyses GMP + ATP = GDP + ADP. Essential for recycling GMP and indirectly, cGMP. The sequence is that of Guanylate kinase from Mesomycoplasma hyopneumoniae (strain 7448) (Mycoplasma hyopneumoniae).